A 460-amino-acid polypeptide reads, in one-letter code: Ribosomal protein uS12 methylthiotransferase RimO (460 aa).

One can recognise an MTTase N-terminal domain in the interval 16-130 (NKIHFISLGC…ILSAIESKEA (115 aa)). [4Fe-4S] cluster contacts are provided by Cys-25, Cys-61, Cys-93, Cys-164, Cys-168, and Cys-171. A Radical SAM core domain is found at 150-382 (STPKHYAYLK…SQTQKKNVEK (233 aa)). In terms of domain architecture, TRAM spans 385–455 (KQLVGQIVEA…GYDLVGRVIK (71 aa)).

Belongs to the methylthiotransferase family. RimO subfamily. It depends on [4Fe-4S] cluster as a cofactor.

It localises to the cytoplasm. The catalysed reaction is L-aspartate(89)-[ribosomal protein uS12]-hydrogen + (sulfur carrier)-SH + AH2 + 2 S-adenosyl-L-methionine = 3-methylsulfanyl-L-aspartate(89)-[ribosomal protein uS12]-hydrogen + (sulfur carrier)-H + 5'-deoxyadenosine + L-methionine + A + S-adenosyl-L-homocysteine + 2 H(+). Catalyzes the methylthiolation of an aspartic acid residue of ribosomal protein uS12. This chain is Ribosomal protein uS12 methylthiotransferase RimO, found in Chlamydia caviae (strain ATCC VR-813 / DSM 19441 / 03DC25 / GPIC) (Chlamydophila caviae).